The sequence spans 75 residues: U6-lycotoxin-Ls1d (75 aa).

The first 21 residues, 1–21 (MKLLLFTALVLVVISLIEVEA), serve as a signal peptide directing secretion. Residues 22–25 (ENER) constitute a propeptide that is removed on maturation.

This sequence belongs to the neurotoxin 19 (CSTX) family. 06 (U6-Lctx) subfamily. Post-translationally, contains 4 disulfide bonds. As to expression, expressed by the venom gland.

The protein resides in the secreted. This Lycosa singoriensis (Wolf spider) protein is U6-lycotoxin-Ls1d.